Consider the following 306-residue polypeptide: tRNA N6-adenosine threonylcarbamoyltransferase (306 aa).

Positions 110 and 114 each coordinate Fe cation. Substrate is bound by residues 132-136 (IASGK), Asp-165, Gly-178, Asp-182, and Asn-268. Fe cation is bound at residue Asp-292.

The protein belongs to the KAE1 / TsaD family. The cofactor is Fe(2+).

Its subcellular location is the cytoplasm. It catalyses the reaction L-threonylcarbamoyladenylate + adenosine(37) in tRNA = N(6)-L-threonylcarbamoyladenosine(37) in tRNA + AMP + H(+). In terms of biological role, required for the formation of a threonylcarbamoyl group on adenosine at position 37 (t(6)A37) in tRNAs that read codons beginning with adenine. Is involved in the transfer of the threonylcarbamoyl moiety of threonylcarbamoyl-AMP (TC-AMP) to the N6 group of A37, together with TsaE and TsaB. TsaD likely plays a direct catalytic role in this reaction. The sequence is that of tRNA N6-adenosine threonylcarbamoyltransferase from Malacoplasma penetrans (strain HF-2) (Mycoplasma penetrans).